The sequence spans 836 residues: Serine/threonine-protein kinase 1 (836 aa).

Residues 1 to 12 (MDHNSPKSRRSR) are compositionally biased toward basic residues. Positions 1 to 244 (MDHNSPKSRR…SLPDSITRED (244 aa)) are disordered. The segment covering 28 to 40 (SDSDSDQGRDRDK) has biased composition (basic and acidic residues). 3 stretches are compositionally biased toward acidic residues: residues 64–75 (DGEGEEDDDDDS), 95–105 (DYDDDDGDESG), and 145–163 (EESS…DDGD). The span at 224–238 (MQQQNSKMSTTSLPD) shows a compositional bias: polar residues. Positions 249–503 (YEFLNELGKG…AAEMLKHKFV (255 aa)) constitute a Protein kinase domain. Residues 255–263 (LGKGSYGSV) and Lys278 each bind ATP. The active-site Proton acceptor is the Asp371. 3 disordered regions span residues 539 to 571 (LEDT…APLT), 600 to 640 (EDET…DSWI), and 760 to 780 (TSSD…PLPP). Residues 562 to 571 (PQNSTEAPLT) show a composition bias toward polar residues. The span at 606–618 (SDSRSQLVREKES) shows a compositional bias: basic and acidic residues.

It belongs to the protein kinase superfamily. STE Ser/Thr protein kinase family. STE20 subfamily. Interacts with MOB1A and MOB1B via its N-terminal region at the plasma membrane and in the nucleus. Binds to BIK1 to phosphorylate and stabilize it. Interacts with and phosphorylates RBOHD upon flagellin perception to activate it. Mn(2+) is required as a cofactor. In terms of processing, autophosphorylates. As to expression, mostly expressed in mature tissues of roots, shoots, hypocotyls, cotyledons, stems, leaves and flowers, as well as in the shoot apical meristem (SAM).

The protein localises to the cell membrane. The protein resides in the nucleus. It localises to the golgi apparatus. Its subcellular location is the trans-Golgi network. It is found in the early endosome. It carries out the reaction L-seryl-[protein] + ATP = O-phospho-L-seryl-[protein] + ADP + H(+). It catalyses the reaction L-threonyl-[protein] + ATP = O-phospho-L-threonyl-[protein] + ADP + H(+). In terms of biological role, serine/threonine-protein kinase. Regulates organ size in coordination with MOB1A by modulating cell proliferation and cell expansion, possibly by facilitating cell cycle exit. Positive regulator of the pathogen-associated molecular pattern (PAMP, e.g. flg22)-triggered immunity (PTI) signaling by stabilizing BIK1 and activating RBOHD by phosphorylation to promote the extracellular reactive oxygen species (ROS) burst involved in defense responses to bacterial infection. This chain is Serine/threonine-protein kinase 1, found in Arabidopsis thaliana (Mouse-ear cress).